Consider the following 293-residue polypeptide: Delta(3,5)-Delta(2,4)-dienoyl-CoA isomerase, mitochondrial (293 aa).

Substrate contacts are provided by residues 84–88 (AGLNL) and glycine 142.

It belongs to the enoyl-CoA hydratase/isomerase family.

The protein localises to the mitochondrion. The enzyme catalyses (3E,5Z)-octadienoyl-CoA = (2E,4E)-octadienoyl-CoA. The catalysed reaction is (3E,5Z,8Z,11Z,14Z)-eicosapentaenoyl-CoA = (2E,4E,8Z,11Z,14Z)-eicosapentaenoyl-CoA. It participates in lipid metabolism; fatty acid beta-oxidation. In terms of biological role, isomerization of 3-trans,5-cis-dienoyl-CoA to 2-trans,4-trans-dienoyl-CoA. This chain is Delta(3,5)-Delta(2,4)-dienoyl-CoA isomerase, mitochondrial (ech1), found in Dictyostelium discoideum (Social amoeba).